A 737-amino-acid chain; its full sequence is Protein OPG064 (737 aa).

Residue M1 is modified to N-acetylmethionine; by host. Cysteines 496 and 535 form a disulfide.

Belongs to the orthopoxvirus OPG064 family. In terms of assembly, interacts with host KLC2; this interaction promotes IEV trafficking by engaging the host kinesin-1 complex. Interacts with protein OPG056. N-acetylated on initiator methionine by host.

Plays a role in intracellular enveloped virus (IEV) transport to the cell surface on microtubules. Together with protein OPG056, forms a complex that interacts with host KLC2 (kinesin light chain isoform 2) to engage the kinesin-1 complex and thereby promote IEV trafficking. The sequence is that of Protein OPG064 (OPG064) from Homo sapiens (Human).